A 689-amino-acid chain; its full sequence is Probable E3 ubiquitin ligase complex SCF subunit sconB (689 aa).

Composition is skewed to basic and acidic residues over residues 1-12 (MDAHELSFRDGH) and 19-29 (MKDECASEEKA). The tract at residues 1-66 (MDAHELSFRD…STQDKPHSFN (66 aa)) is disordered. The region spanning 186–232 (IDFLTALPPEISFKILCYLDTTSLCKAAQVSRRWRALADDDVVWHRM) is the F-box domain. Residues 267–306 (AATWDVSEQPAETESNSATIDTAASGSKRKPESDKEDTAM) form a disordered region. Residues 276–291 (PAETESNSATIDTAAS) show a composition bias toward polar residues. The span at 295–306 (RKPESDKEDTAM) shows a compositional bias: basic and acidic residues. WD repeat units lie at residues 358–395 (GHSN…ELRT), 398–437 (GHRS…STYS), 439–475 (HRGG…TCLL), 477–518 (GHTD…RTFH), 572–615 (DTPS…CLRT), 616–655 (FFGH…CERT), and 658–689 (GHSG…SFQT).

Belongs to the WD repeat MET30/SCONB/SCON-2 family. As to quaternary structure, component of the SCF(sconB) E3 ubiquitin ligase complex.

It participates in protein modification; protein ubiquitination. In terms of biological role, component of the SCF(sconB) E3 ubiquitin ligase complex involved in the regulation of sulfur metabolite repression, probably by mediating the inactivation or degradation of the metR transcription factor. The chain is Probable E3 ubiquitin ligase complex SCF subunit sconB (sconB) from Neosartorya fischeri (strain ATCC 1020 / DSM 3700 / CBS 544.65 / FGSC A1164 / JCM 1740 / NRRL 181 / WB 181) (Aspergillus fischerianus).